We begin with the raw amino-acid sequence, 337 residues long: Ornithine carbamoyltransferase, catabolic (337 aa).

Carbamoyl phosphate is bound by residues 58-61 (STRT), Gln-85, Arg-109, and 135-138 (HPTQ). L-ornithine contacts are provided by residues Asn-167, Asp-231, and 235–236 (SM). Carbamoyl phosphate-binding positions include 272–273 (CL) and Arg-317.

It belongs to the aspartate/ornithine carbamoyltransferase superfamily. OTCase family.

It localises to the cytoplasm. It catalyses the reaction carbamoyl phosphate + L-ornithine = L-citrulline + phosphate + H(+). The protein operates within amino-acid degradation; L-arginine degradation via ADI pathway; carbamoyl phosphate from L-arginine: step 2/2. Its function is as follows. Reversibly catalyzes the transfer of the carbamoyl group from carbamoyl phosphate (CP) to the N(epsilon) atom of ornithine (ORN) to produce L-citrulline. This chain is Ornithine carbamoyltransferase, catabolic (arcB), found in Latilactobacillus sakei (Lactobacillus sakei).